We begin with the raw amino-acid sequence, 493 residues long: Signal recognition particle subunit SRP54 3 (493 aa).

The interval 1–294 is G-domain; sequence MVLADVGGSI…NVEPFVARLL (294 aa). Residues 107–114, 189–193, and 247–250 contribute to the GTP site; these read GLQGSGKT, DTSGR, and TKLD. The M-domain stretch occupies residues 295 to 493; the sequence is GRGDLPGLID…KMLAGMRGGA (199 aa).

Belongs to the GTP-binding SRP family. SRP54 subfamily. In terms of assembly, component of a signal recognition particle (SRP) complex that consists of a 7SL RNA molecule of 300 nucleotides and six protein subunits: SRP72, SRP68, SRP54, SRP19, SRP14 and SRP9.

The protein resides in the cytoplasm. Its subcellular location is the endoplasmic reticulum. The catalysed reaction is GTP + H2O = GDP + phosphate + H(+). Component of the signal recognition particle (SRP) complex, a ribonucleoprotein complex that mediates the cotranslational targeting of secretory and membrane proteins to the endoplasmic reticulum (ER). As part of the SRP complex, associates with the SRP receptor (SR) component SRPRA to target secretory proteins to the endoplasmic reticulum membrane. Binds to the signal sequence of presecretory proteins when they emerge from the ribosomes. Displays basal GTPase activity, and stimulates reciprocal GTPase activation of the SR subunit SRPRA. Forms a guanosine 5'-triphosphate (GTP)-dependent complex with the SR subunit SRPRA. SR compaction and GTPase mediated rearrangement of SR drive SRP-mediated cotranslational protein translocation into the ER. Requires the presence of SRP9/SRP14 and/or SRP19 to stably interact with RNA. This Hordeum vulgare (Barley) protein is Signal recognition particle subunit SRP54 3 (SRP54-3).